We begin with the raw amino-acid sequence, 340 residues long: tRNA N6-adenosine threonylcarbamoyltransferase (340 aa).

Fe cation is bound by residues His111 and His115. Substrate contacts are provided by residues 134 to 138 (LVSGG), Asp167, Gly180, and Asn276. Position 304 (Asp304) interacts with Fe cation.

The protein belongs to the KAE1 / TsaD family. Requires Fe(2+) as cofactor.

The protein resides in the cytoplasm. It carries out the reaction L-threonylcarbamoyladenylate + adenosine(37) in tRNA = N(6)-L-threonylcarbamoyladenosine(37) in tRNA + AMP + H(+). Required for the formation of a threonylcarbamoyl group on adenosine at position 37 (t(6)A37) in tRNAs that read codons beginning with adenine. Is involved in the transfer of the threonylcarbamoyl moiety of threonylcarbamoyl-AMP (TC-AMP) to the N6 group of A37, together with TsaE and TsaB. TsaD likely plays a direct catalytic role in this reaction. This chain is tRNA N6-adenosine threonylcarbamoyltransferase, found in Helicobacter pylori (strain ATCC 700392 / 26695) (Campylobacter pylori).